A 65-amino-acid polypeptide reads, in one-letter code: Large ribosomal subunit protein uL29 (65 aa).

It belongs to the universal ribosomal protein uL29 family.

The sequence is that of Large ribosomal subunit protein uL29 from Mycoplasmopsis synoviae (strain 53) (Mycoplasma synoviae).